The primary structure comprises 208 residues: CASP-like protein 1D1 (208 aa).

Positions 1–36 (MSSVDTEKPAPPPLETEAPPPPPPPPPPPPPPPPPP) are disordered. The Cytoplasmic segment spans residues 1–41 (MSSVDTEKPAPPPLETEAPPPPPPPPPPPPPPPPPPAGYSA). Pro residues predominate over residues 9–36 (PAPPPLETEAPPPPPPPPPPPPPPPPPP). A helical membrane pass occupies residues 42–62 (LDVVLRILLLGSAVASVVVMV). Residues 63 to 89 (TSVQTKLIAVAGVPVLVSNKAKFQNSP) lie on the Extracellular side of the membrane. A helical membrane pass occupies residues 90–110 (AFIYFVAALSVVGLYSIITTL). Residues 111-133 (ASFIFISKPSCSTKTILHLAIWD) are Cytoplasmic-facing. A helical transmembrane segment spans residues 134 to 154 (VLMLGLAASATGTAGGVAYVG). Over 155-180 (LKGNSHVGWNKVCNTYDKFCRHVGGS) the chain is Extracellular. The chain crosses the membrane as a helical span at residues 181-201 (IAVALFASILLVLLVWLSLFT). Topologically, residues 202–208 (LYSRIRK) are cytoplasmic.

Belongs to the Casparian strip membrane proteins (CASP) family. As to quaternary structure, homodimer and heterodimers.

Its subcellular location is the cell membrane. This chain is CASP-like protein 1D1, found in Vitis vinifera (Grape).